The primary structure comprises 527 residues: Baicalin-beta-D-glucuronidase (527 aa).

The N-terminal stretch at 1-25 (MGFQVWQKGLCVLCFSLIFICGVIG) is a signal peptide. Glutamate 212 functions as the Proton donor in the catalytic mechanism. Residue glutamate 329 is the Nucleophile of the active site.

It belongs to the glycosyl hydrolase 79 family. Homotetramer.

The enzyme catalyses baicalin + H2O = baicalein + D-glucuronate + H(+). In terms of biological role, beta-glucuronidase involved in the initiation of H(2)O(2) metabolism via the production of baicalein. Unable to use glycyrrhizin, gypsogenin-3-O-D-glucuronide, luteolin-7-O-D-glucoside and apigenin-7-O-D-glucoside as substrates. The protein is Baicalin-beta-D-glucuronidase (SGUS) of Scutellaria baicalensis (Baical skullcap).